Consider the following 338-residue polypeptide: Tryptophan--tRNA ligase (338 aa).

ATP contacts are provided by residues 11–13 and 19–20; these read QPS and GN. Residues 12-20 carry the 'HIGH' region motif; the sequence is PSGELSIGN. Asp-135 is an L-tryptophan binding site. Residues 147 to 149, Val-189, and 198 to 202 contribute to the ATP site; these read GSD and KMSKS. The 'KMSKS' region signature appears at 198–202; it reads KMSKS.

It belongs to the class-I aminoacyl-tRNA synthetase family. In terms of assembly, homodimer.

Its subcellular location is the cytoplasm. The enzyme catalyses tRNA(Trp) + L-tryptophan + ATP = L-tryptophyl-tRNA(Trp) + AMP + diphosphate + H(+). In terms of biological role, catalyzes the attachment of tryptophan to tRNA(Trp). The chain is Tryptophan--tRNA ligase from Vibrio vulnificus (strain YJ016).